Here is a 347-residue protein sequence, read N- to C-terminus: Lipoyl synthase (347 aa).

7 residues coordinate [4Fe-4S] cluster: C55, C60, C66, C81, C85, C88, and S292. The Radical SAM core domain maps to 67–281 (WEDREATFLI…RDYGHDIGFA (215 aa)).

It belongs to the radical SAM superfamily. Lipoyl synthase family. [4Fe-4S] cluster is required as a cofactor.

The protein resides in the cytoplasm. It carries out the reaction [[Fe-S] cluster scaffold protein carrying a second [4Fe-4S](2+) cluster] + N(6)-octanoyl-L-lysyl-[protein] + 2 oxidized [2Fe-2S]-[ferredoxin] + 2 S-adenosyl-L-methionine + 4 H(+) = [[Fe-S] cluster scaffold protein] + N(6)-[(R)-dihydrolipoyl]-L-lysyl-[protein] + 4 Fe(3+) + 2 hydrogen sulfide + 2 5'-deoxyadenosine + 2 L-methionine + 2 reduced [2Fe-2S]-[ferredoxin]. It participates in protein modification; protein lipoylation via endogenous pathway; protein N(6)-(lipoyl)lysine from octanoyl-[acyl-carrier-protein]: step 2/2. Catalyzes the radical-mediated insertion of two sulfur atoms into the C-6 and C-8 positions of the octanoyl moiety bound to the lipoyl domains of lipoate-dependent enzymes, thereby converting the octanoylated domains into lipoylated derivatives. The chain is Lipoyl synthase from Corynebacterium kroppenstedtii (strain DSM 44385 / JCM 11950 / CIP 105744 / CCUG 35717).